Here is a 529-residue protein sequence, read N- to C-terminus: Peptide chain release factor 3 (529 aa).

The tr-type G domain occupies N11–L280. Residues S20–T27, D88–H92, and N142–D145 contribute to the GTP site.

The protein belongs to the TRAFAC class translation factor GTPase superfamily. Classic translation factor GTPase family. PrfC subfamily.

The protein localises to the cytoplasm. Its function is as follows. Increases the formation of ribosomal termination complexes and stimulates activities of RF-1 and RF-2. It binds guanine nucleotides and has strong preference for UGA stop codons. It may interact directly with the ribosome. The stimulation of RF-1 and RF-2 is significantly reduced by GTP and GDP, but not by GMP. The protein is Peptide chain release factor 3 of Pseudoalteromonas translucida (strain TAC 125).